A 226-amino-acid polypeptide reads, in one-letter code: UPF0173 metal-dependent hydrolase Msed_2125 (226 aa).

It belongs to the UPF0173 family.

This Metallosphaera sedula (strain ATCC 51363 / DSM 5348 / JCM 9185 / NBRC 15509 / TH2) protein is UPF0173 metal-dependent hydrolase Msed_2125.